Reading from the N-terminus, the 584-residue chain is Extracellular serine/threonine protein kinase FAM20C (584 aa).

The Cytoplasmic portion of the chain corresponds to 1 to 10 (MKMMLVRRFR). The propeptide occupies 1-92 (MKMMLVRRFR…PNKHTLRILQ (92 aa)). A helical; Signal-anchor for type II membrane protein transmembrane segment spans residues 11–31 (VLILMVFLVACALHIALDLLP). At 32–584 (RLERRGARPS…DTEHRAASAR (553 aa)) the chain is on the lumenal side. 2 disordered regions span residues 62–81 (QVRGRPGEPPAASSAAGDAG) and 94–159 (FSSD…GDAS). 2 stretches are compositionally biased toward low complexity: residues 71 to 81 (PAASSAAGDAG) and 95 to 112 (SSDPSSNLSSHSLEKLPP). The N-linked (GlcNAc...) asparagine glycan is linked to Asn101. Ser106 is subject to Phosphoserine. A compositionally biased stretch (basic and acidic residues) spans 116–149 (PAERALRGRDPGALRPHDPAHRPLLRDPGPRRSE). 3 residues coordinate ATP: Gln269, Lys285, and Glu306. Residue Glu306 participates in Mn(2+) binding. The N-linked (GlcNAc...) asparagine glycan is linked to Asn335. Positions 354–565 (FISPANNICF…AVRDCVERNG (212 aa)) are kinase domain. Intrachain disulfides connect Cys362/Cys378 and Cys367/Cys371. An ATP-binding site is contributed by 389 to 392 (AAFL). Cystine bridges form between Cys426–Cys500 and Cys501–Cys560. Asp458 is a catalytic residue. Glu463 lines the ATP pocket. An N-linked (GlcNAc...) asparagine glycan is attached at Asn470. Asp478 is a binding site for ATP. Mn(2+) is bound at residue Asp478.

Belongs to the FAM20 family. As to quaternary structure, homodimer; disulfide-linked. Interacts with FAM20A; probably forming a heterotetramer of 2 subunits of FAM20A and 2 subunits of FAM20C. Interacts with protease MBTPS1/S1P; the interaction results in FAM20C cleavage and secretion. Interacts with COPII components SEC23A and SEC24A; transport of FAM20C from the endoplasmic reticulum to the Golgi is likely to be mediated by COPII vesicles. The cofactor is Mn(2+). N-glycosylation is required for folding. In terms of processing, autophosphorylated. Post-translationally, propeptide cleavage by MBTPS1/S1P promotes FAM20C secretion and maximal kinase activity which is essential for efficient osteoblast differentiation and biomineralization. Widely expressed.

The protein localises to the golgi apparatus membrane. Its subcellular location is the secreted. It is found in the endoplasmic reticulum. It catalyses the reaction L-seryl-[protein] + ATP = O-phospho-L-seryl-[protein] + ADP + H(+). The enzyme catalyses L-threonyl-[protein] + ATP = O-phospho-L-threonyl-[protein] + ADP + H(+). Its activity is regulated as follows. Serine/threonine protein kinase activity is increased upon interaction with FAM20A. Golgi serine/threonine protein kinase that phosphorylates secretory pathway proteins within Ser-x-Glu/pSer motifs and plays a key role in biomineralization of bones and teeth. Constitutes the main protein kinase for extracellular proteins, generating the majority of the extracellular phosphoproteome. Mainly phosphorylates proteins within the Ser-x-Glu/pSer motif, but also displays a broader substrate specificity. Phosphorylates ERO1A, enhancing its activity which is required to maintain endoplasmic reticulum redox homeostasis and for oxidative protein folding. During endoplasmic reticulum stress, phosphorylates P4HB/PDIA1 which induces a functional switch, causing P4HB to change from an oxidoreductase to a molecular chaperone. This is critical to maintain ER proteostasis and reduce cell death under ER stress. Phosphorylation of P4HB also promotes its interaction with ERN1, leading to reduced activity of ERN1, a key sensor for the endoplasmic reticulum unfolded protein response. Required for osteoblast differentiation and mineralization. Phosphorylates casein as well as a number of proteins involved in biomineralization such as AMELX, AMTN, ENAM and SPP1/OPN. In addition to its role in biomineralization, also plays a role in lipid homeostasis, wound healing and cell migration and adhesion. The chain is Extracellular serine/threonine protein kinase FAM20C from Homo sapiens (Human).